A 161-amino-acid polypeptide reads, in one-letter code: tRNA-specific adenosine deaminase (161 aa).

A CMP/dCMP-type deaminase domain is found at 2-120 (TQDELYMKEA…GTLMNLLQEE (119 aa)). His-53 provides a ligand contact to Zn(2+). Glu-55 functions as the Proton donor in the catalytic mechanism. The Zn(2+) site is built by Cys-83 and Cys-86.

Belongs to the cytidine and deoxycytidylate deaminase family. In terms of assembly, homodimer. Zn(2+) serves as cofactor.

The enzyme catalyses adenosine(34) in tRNA + H2O + H(+) = inosine(34) in tRNA + NH4(+). Functionally, catalyzes the deamination of adenosine to inosine at the wobble position 34 of tRNA(Arg2). The chain is tRNA-specific adenosine deaminase from Bacillus subtilis (strain 168).